The following is a 203-amino-acid chain: E3 ubiquitin-protein ligase RNF152 (203 aa).

The RING-type zinc-finger motif lies at 12–55 (CQICFNYYSPRRRPKLLDCKHTCCSVCLQQMRTSQKDVRCPWCR). The segment at 106–165 (ISKERALLPGDMGCRLLPGSQQKSVTVVTVPAEQRPLQGGAPQEAVEEEPDRRGVAKSST) is necessary for interaction with RRAGA. Residues 167–187 (SGVCTVILVACVLVFLLGIVL) form a helical membrane-spanning segment.

This sequence belongs to the RNF152 family. In terms of assembly, interacts with RRAGA (inactive GDP-bound form); stimulated by amino acid starvation. In terms of processing, ubiquitinated. Autoubiquitinated in vitro, leading to its degradation by the proteasome.

The protein resides in the lysosome membrane. The enzyme catalyses S-ubiquitinyl-[E2 ubiquitin-conjugating enzyme]-L-cysteine + [acceptor protein]-L-lysine = [E2 ubiquitin-conjugating enzyme]-L-cysteine + N(6)-ubiquitinyl-[acceptor protein]-L-lysine.. It functions in the pathway protein modification; protein ubiquitination. Its function is as follows. E3 ubiquitin-protein ligase that acts as a negative regulator of mTORC1 signaling by mediating ubiquitination of RagA/RRAGA and RHEB. Catalyzes 'Lys-63'-linked polyubiquitination of RagA/RRAGA in response to amino acid starvation, thereby regulating mTORC1 signaling. Also mediates monoubiquitination of RHEB, promoting its association with the TSC-TBC complex and subsequent inhibition. Also mediates 'Lys-48'-linked polyubiquitination of target proteins and their subsequent targeting to the proteasome for degradation. Induces apoptosis when overexpressed. The polypeptide is E3 ubiquitin-protein ligase RNF152 (Ailuropoda melanoleuca (Giant panda)).